The following is a 388-amino-acid chain: T-cell surface glycoprotein CD1e, membrane-associated (388 aa).

The N-terminal stretch at 1–19 is a signal peptide; the sequence is MLLLFLLFEGLCCPGENTA. Positions 20–31 are cleaved as a propeptide — removed in sCD1e; that stretch reads APQALQSYHLAA. Residues Asn47 and Asn84 are each glycosylated (N-linked (GlcNAc...) asparagine). The region spanning 191–301 is the Ig-like domain; that stretch reads PRFLAGLMEA…LGGHDLIIHW (111 aa). Cys230 and Cys285 are oxidised to a cystine. The helical transmembrane segment at 305-325 threads the bilayer; the sequence is SIFLILICLTVIVTLVILVVV.

As to quaternary structure, heterodimer with B2M (beta-2-microglobulin). The association with B2M appears to be facilitated by the presence of the propeptide. In terms of processing, mono-ubiquitinated. Post-translationally, proteolytically cleaved in late endosomes to yield a soluble form. In terms of tissue distribution, expressed on cortical thymocytes, dendritic cells, Langerhans cells, on certain T-cell leukemias, and in various other tissues.

The protein localises to the golgi apparatus membrane. It localises to the early endosome. Its subcellular location is the late endosome. The protein resides in the lysosome lumen. Functionally, T-cell surface glycoprotein CD1e, soluble binds diacetylated lipids, including phosphatidyl inositides and diacylated sulfoglycolipids, and is required for the presentation of glycolipid antigens on the cell surface. The membrane-associated form is not active. In Homo sapiens (Human), this protein is T-cell surface glycoprotein CD1e, membrane-associated (CD1E).